We begin with the raw amino-acid sequence, 426 residues long: Enolase (426 aa).

Residue Gln163 coordinates (2R)-2-phosphoglycerate. The active-site Proton donor is Glu205. Mg(2+) contacts are provided by Asp242, Glu285, and Asp312. Residues Lys337, Arg366, Ser367, and Lys388 each coordinate (2R)-2-phosphoglycerate. The active-site Proton acceptor is the Lys337.

Belongs to the enolase family. Mg(2+) serves as cofactor.

The protein localises to the cytoplasm. It is found in the secreted. The protein resides in the cell surface. The enzyme catalyses (2R)-2-phosphoglycerate = phosphoenolpyruvate + H2O. The protein operates within carbohydrate degradation; glycolysis; pyruvate from D-glyceraldehyde 3-phosphate: step 4/5. Functionally, catalyzes the reversible conversion of 2-phosphoglycerate (2-PG) into phosphoenolpyruvate (PEP). It is essential for the degradation of carbohydrates via glycolysis. The chain is Enolase from Gluconobacter oxydans (strain 621H) (Gluconobacter suboxydans).